Reading from the N-terminus, the 223-residue chain is Matrix protein (223 aa).

A compositionally biased stretch (basic residues) spans 1–10; the sequence is MLTLFKKGKP. The segment at 1–23 is disordered; the sequence is MLTLFKKGKPKGGSVDDRNSSYR. Residues 14–23 are compositionally biased toward basic and acidic residues; it reads SVDDRNSSYR.

Homomultimer. Interacts with nucleoprotein and with the cytoplasmic domain of glycoprotein.

Its subcellular location is the virion membrane. The protein resides in the host endomembrane system. Its function is as follows. Plays a major role in assembly and budding of virion. Completely covers the ribonucleoprotein coil and keep it in condensed bullet-shaped form. Inhibits viral transcription and stimulates replication. This chain is Matrix protein (M), found in Bos taurus (Bovine).